The following is a 58-amino-acid chain: Ribulose bisphosphate carboxylase large chain (58 aa).

A propeptide spanning residues 1-2 is cleaved from the precursor; the sequence is MS. An N-acetylproline modification is found at Pro-3. At Lys-14 the chain carries N6,N6,N6-trimethyllysine.

Belongs to the RuBisCO large chain family. Type I subfamily. As to quaternary structure, heterohexadecamer of 8 large chains and 8 small chains.

The protein resides in the plastid. It localises to the chloroplast. It carries out the reaction 2 (2R)-3-phosphoglycerate + 2 H(+) = D-ribulose 1,5-bisphosphate + CO2 + H2O. It catalyses the reaction D-ribulose 1,5-bisphosphate + O2 = 2-phosphoglycolate + (2R)-3-phosphoglycerate + 2 H(+). Functionally, ruBisCO catalyzes two reactions: the carboxylation of D-ribulose 1,5-bisphosphate, the primary event in carbon dioxide fixation, as well as the oxidative fragmentation of the pentose substrate in the photorespiration process. Both reactions occur simultaneously and in competition at the same active site. The chain is Ribulose bisphosphate carboxylase large chain (rbcL) from Euonymus maackii (Maack's spindle tree).